The sequence spans 942 residues: ATP-dependent RNA helicase DDX42 (942 aa).

The segment covering Met1–Gly18 has biased composition (gly residues). Positions Met1–Asp114 are disordered. Position 5 is an N6-acetyllysine (Lys5). Arg12 is subject to Omega-N-methylarginine. Low complexity predominate over residues Ser35–Ala52. Ser58 is modified (phosphoserine). Residues Asp70–Ser84 are compositionally biased toward acidic residues. Phosphoserine occurs at positions 96, 104, 109, and 111. The stretch at Leu116–Gln157 forms a coiled coil. The segment at Glu182–Ile203 is disordered. Phosphoserine is present on Ser185. Positions Ser253–Cys281 match the Q motif motif. The Helicase ATP-binding domain maps to Val284–Val459. Ala297–Thr304 contributes to the ATP binding site. A DEAD box motif is present at residues Asp407–Asp410. The Helicase C-terminal domain maps to Trp487 to Ala632. 2 stretches are compositionally biased toward polar residues: residues Leu737–Thr760 and Gly786–Glu798. Disordered regions lie at residues Leu737–Gly762 and Gly783–Ser942. Positions Asn738–Arg833 are necessary for interaction with TP53BP2. Ser754 carries the post-translational modification Phosphoserine. Residues Ser820–Ala924 show a composition bias toward basic and acidic residues. Lys899 is covalently cross-linked (Glycyl lysine isopeptide (Lys-Gly) (interchain with G-Cter in SUMO2)).

It belongs to the DEAD box helicase family. DDX42 subfamily. In terms of assembly, transient component of the SF3B subcomplex of the 17S U2 SnRNP complex. Interacts (via the C-terminus) with TP53BP2; the interaction is not inhibitied by TP53BP2 ubiquitination and is independent of p53/TP53.

It is found in the cytoplasm. The protein localises to the nucleus. It carries out the reaction ATP + H2O = ADP + phosphate + H(+). In terms of biological role, ATP-dependent RNA helicase that binds to partially double-stranded RNAs (dsRNAs) in order to unwind RNA secondary structures. Unwinding is promoted in the presence of single-strand binding proteins. Also mediates RNA duplex formation thereby displacing the single-strand RNA binding protein. ATP and ADP modulate its activity: ATP binding and hydrolysis by DDX42 triggers RNA strand separation, whereas the ADP-bound form of the protein triggers annealing of complementary RNA strands. Required for assembly of the 17S U2 SnRNP complex of the spliceosome, a large ribonucleoprotein complex that removes introns from transcribed pre-mRNAs: DDX42 associates transiently with the SF3B subcomplex of the 17S U2 SnRNP complex and is released after fulfilling its role in the assembly of 17S U2 SnRNP. Involved in the survival of cells by interacting with TP53BP2 and thereby counteracting the apoptosis-stimulating activity of TP53BP2. Relocalizes TP53BP2 to the cytoplasm. The sequence is that of ATP-dependent RNA helicase DDX42 (DDX42) from Pongo abelii (Sumatran orangutan).